A 424-amino-acid chain; its full sequence is UDP-galactose transporter homolog 1 (424 aa).

A run of 6 helical transmembrane segments spans residues 57 to 77, 107 to 127, 144 to 164, 173 to 193, 197 to 217, and 234 to 254; these read LWQLAFCVAGIYASFLSWGVL, IVLNTIQSTFAAVTGFLYLYF, IIFPLVLVSISSSLASPFGYA, TFILAKSCKLLPVMFLHLTIF, YPLYKYGVVLLVTLGVATFTL, and TSGSSAWGIFLLSINLLLDGL. N256 is a glycosylation site (N-linked (GlcNAc...) asparagine). 3 helical membrane passes run 293–313, 337–357, and 380–400; these read LLIMPHLSSTGILHAILPVPI, SVLGFAAFGAMGQLFIFYTLS, and VFWFGHSLSAGQWLGIGLVFG.

Belongs to the nucleotide-sugar transporter family. SLC35B subfamily.

The protein resides in the endoplasmic reticulum membrane. Its function is as follows. May be involved in specific transport of UDP-Gal from the cytosol to the Golgi lumen. Involved in the maintenance of optimal conditions for the folding of secretory pathway proteins in the endoplasmic reticulum. The polypeptide is UDP-galactose transporter homolog 1 (hut1) (Emericella nidulans (strain FGSC A4 / ATCC 38163 / CBS 112.46 / NRRL 194 / M139) (Aspergillus nidulans)).